Here is a 125-residue protein sequence, read N- to C-terminus: Snaclec alboaggregin-A subunit beta (125 aa).

The region spanning 1–125 is the C-type lectin domain; the sequence is GFDCPFGWSS…TRYPVCKFXG (125 aa). Intrachain disulfides connect C4–C15, C32–C121, and C98–C113.

It belongs to the snaclec family. Heterotetramer of the subunits alpha, alpha', beta and beta'; disulfide-linked. As to expression, expressed by the venom gland.

Its subcellular location is the secreted. Potent platelet activator that aggregates platelets via both GPIbalpha (GP1BA) and GPVI (GP6). Induces a tyrosine phosphorylation profile in platelets that resembles this produced by collagen, involving the time dependent tyrosine phosphorylation of Fc receptor gamma chain (FCGR1A), phospholipase Cgamma2 (PLCG2), and LAT. This is Snaclec alboaggregin-A subunit beta from Trimeresurus albolabris (White-lipped pit viper).